The following is a 295-amino-acid chain: Ribosomal RNA small subunit methyltransferase H (295 aa).

Residues 35–37, Glu55, Phe82, Asp103, and Gln110 contribute to the S-adenosyl-L-methionine site; that span reads GGH.

Belongs to the methyltransferase superfamily. RsmH family.

Its subcellular location is the cytoplasm. The catalysed reaction is cytidine(1402) in 16S rRNA + S-adenosyl-L-methionine = N(4)-methylcytidine(1402) in 16S rRNA + S-adenosyl-L-homocysteine + H(+). Functionally, specifically methylates the N4 position of cytidine in position 1402 (C1402) of 16S rRNA. In Desulfotalea psychrophila (strain LSv54 / DSM 12343), this protein is Ribosomal RNA small subunit methyltransferase H.